Here is a 416-residue protein sequence, read N- to C-terminus: Gamma-glutamyl phosphate reductase (416 aa).

It belongs to the gamma-glutamyl phosphate reductase family.

The protein resides in the cytoplasm. It carries out the reaction L-glutamate 5-semialdehyde + phosphate + NADP(+) = L-glutamyl 5-phosphate + NADPH + H(+). It participates in amino-acid biosynthesis; L-proline biosynthesis; L-glutamate 5-semialdehyde from L-glutamate: step 2/2. In terms of biological role, catalyzes the NADPH-dependent reduction of L-glutamate 5-phosphate into L-glutamate 5-semialdehyde and phosphate. The product spontaneously undergoes cyclization to form 1-pyrroline-5-carboxylate. The chain is Gamma-glutamyl phosphate reductase from Leptospira interrogans serogroup Icterohaemorrhagiae serovar Lai (strain 56601).